The following is a 153-amino-acid chain: MGEKLICNNKKAFHDFFIEERFEAGMVLKGTEVKSLRDGKANLNDSFALIRNGEIFLHNLHINPYAFGNRENHDPDRLRKLLMHKKEIEKLFGKIREKGYSVVPLRLYFKNGLAKVELGLAKGKKLYDKREDMKKKDQSREMAQALREKSKSH.

The disordered stretch occupies residues 129 to 153 (KREDMKKKDQSREMAQALREKSKSH).

It belongs to the SmpB family.

It localises to the cytoplasm. In terms of biological role, required for rescue of stalled ribosomes mediated by trans-translation. Binds to transfer-messenger RNA (tmRNA), required for stable association of tmRNA with ribosomes. tmRNA and SmpB together mimic tRNA shape, replacing the anticodon stem-loop with SmpB. tmRNA is encoded by the ssrA gene; the 2 termini fold to resemble tRNA(Ala) and it encodes a 'tag peptide', a short internal open reading frame. During trans-translation Ala-aminoacylated tmRNA acts like a tRNA, entering the A-site of stalled ribosomes, displacing the stalled mRNA. The ribosome then switches to translate the ORF on the tmRNA; the nascent peptide is terminated with the 'tag peptide' encoded by the tmRNA and targeted for degradation. The ribosome is freed to recommence translation, which seems to be the essential function of trans-translation. The sequence is that of SsrA-binding protein from Geobacter sulfurreducens (strain ATCC 51573 / DSM 12127 / PCA).